The sequence spans 433 residues: Coiled-coil domain-containing protein 71 (433 aa).

Serine 125 carries the phosphoserine modification. Disordered regions lie at residues 204–256 (LKVR…GCSA), 284–310 (QTKTVRVRAKAKQAKPKAARAKAKAAV), and 325–396 (KAAQ…RKSQ). Composition is skewed to basic residues over residues 216–230 (KAPRKITSKGLKHLT) and 288–306 (VRVRAKAKQAKPKAARAKA). Positions 260-330 (KTVQAQASQT…QAKAKAAQTK (71 aa)) form a coiled coil.

This Mus musculus (Mouse) protein is Coiled-coil domain-containing protein 71 (Ccdc71).